A 212-amino-acid polypeptide reads, in one-letter code: Thymidylate kinase (212 aa).

10–17 is a binding site for ATP; it reads GPDGAGKT.

It belongs to the thymidylate kinase family.

The enzyme catalyses dTMP + ATP = dTDP + ADP. Functionally, phosphorylation of dTMP to form dTDP in both de novo and salvage pathways of dTTP synthesis. The sequence is that of Thymidylate kinase from Lactobacillus delbrueckii subsp. bulgaricus (strain ATCC 11842 / DSM 20081 / BCRC 10696 / JCM 1002 / NBRC 13953 / NCIMB 11778 / NCTC 12712 / WDCM 00102 / Lb 14).